The sequence spans 264 residues: Stage IV sporulation protein FA (264 aa).

A compositionally biased stretch (basic and acidic residues) spans 1–10 (MSHRADEIRK). A disordered region spans residues 1-37 (MSHRADEIRKRLEKRRKQLSGSKRFSTQTVSEKQKPP). Residues 1-72 (MSHRADEIRK…GKHPLVKTDS (72 aa)) lie on the Mother cell cytoplasmic side of the membrane. Over residues 19-31 (LSGSKRFSTQTVS) the composition is skewed to polar residues. A helical transmembrane segment spans residues 73–90 (IILKCLLSACLVLVSAIA). Topologically, residues 91–264 (YKTNIGPVSQ…IDPIQVISFE (174 aa)) are forespore intermembrane space.

As to quaternary structure, forms a complex with BofA and SpoIVFB localized in the mother-cell membrane surrounding the forespore. Post-translationally, may be degraded by FtsH. It is stabilized by an ftsH disruption mutant, and in a probably independent fashion, by overexpression of BofA.

The protein localises to the forespore outer membrane. Its function is as follows. Implicated in the coupling of mother cell to forespore gene expression. Required for spore formation at 37 degrees Celsius, but not at 30 degrees Celsius. SpoIVFA plays a central role in both maintaining the SpoIVFA/BofA/SpoIVFB complex and anchoring it to the outer forespore membrane. SpoIVFA brings BofA into close proximity to SpoIVFB, allowing BofA to inhibit SpoIVFB. Increased accumulation of SpoIVFA seems to inhibit the activity of SpoIVFB and thus regulates the activation of sigma-K. This chain is Stage IV sporulation protein FA (spoIVFA), found in Bacillus subtilis (strain 168).